The sequence spans 379 residues: Chaperone protein DnaJ (379 aa).

The J domain maps to 4–69; it reads DLYETLGVKK…QKRAAYDRYG (66 aa). A CR-type zinc finger spans residues 137 to 215; sequence GKTAQIRVPT…CHGQGRVTEE (79 aa). Positions 150, 153, 167, 170, 189, 192, 203, and 206 each coordinate Zn(2+). CXXCXGXG motif repeat units lie at residues 150 to 157, 167 to 174, 189 to 196, and 203 to 210; these read CDVCTGSG, CATCQGSG, CPTCGGRG, and CTKCHGQG.

This sequence belongs to the DnaJ family. As to quaternary structure, homodimer. Zn(2+) serves as cofactor.

It is found in the cytoplasm. In terms of biological role, participates actively in the response to hyperosmotic and heat shock by preventing the aggregation of stress-denatured proteins and by disaggregating proteins, also in an autonomous, DnaK-independent fashion. Unfolded proteins bind initially to DnaJ; upon interaction with the DnaJ-bound protein, DnaK hydrolyzes its bound ATP, resulting in the formation of a stable complex. GrpE releases ADP from DnaK; ATP binding to DnaK triggers the release of the substrate protein, thus completing the reaction cycle. Several rounds of ATP-dependent interactions between DnaJ, DnaK and GrpE are required for fully efficient folding. Also involved, together with DnaK and GrpE, in the DNA replication of plasmids through activation of initiation proteins. The sequence is that of Chaperone protein DnaJ from Sinorhizobium fredii (strain NBRC 101917 / NGR234).